The primary structure comprises 187 residues: MYLYKKNYYGYAESLLDISISENNVEKYINDCFFILSIIQNNQVLILLFKSHFIGKQEKFNIIDKIFSAKIEKILVNFLKVIAKNNLFLYYKQILLKYIKLANSHLSQTWGEIETAFPISSVMTSSFESILSKKLGKKVHLRHKINSKLISGIRIIVDNQIFENSLFSELKLLKQNLKKHLITKNDL.

It belongs to the ATPase delta chain family. In terms of assembly, F-type ATPases have 2 components, F(1) - the catalytic core - and F(0) - the membrane proton channel. F(1) has five subunits: alpha(3), beta(3), gamma(1), delta(1), epsilon(1). F(0) has three main subunits: a(1), b(2) and c(10-14). The alpha and beta chains form an alternating ring which encloses part of the gamma chain. F(1) is attached to F(0) by a central stalk formed by the gamma and epsilon chains, while a peripheral stalk is formed by the delta and b chains.

It localises to the cell membrane. Functionally, f(1)F(0) ATP synthase produces ATP from ADP in the presence of a proton or sodium gradient. F-type ATPases consist of two structural domains, F(1) containing the extramembraneous catalytic core and F(0) containing the membrane proton channel, linked together by a central stalk and a peripheral stalk. During catalysis, ATP synthesis in the catalytic domain of F(1) is coupled via a rotary mechanism of the central stalk subunits to proton translocation. Its function is as follows. This protein is part of the stalk that links CF(0) to CF(1). It either transmits conformational changes from CF(0) to CF(1) or is implicated in proton conduction. The protein is ATP synthase subunit delta of Mesomycoplasma hyopneumoniae (strain J / ATCC 25934 / NCTC 10110) (Mycoplasma hyopneumoniae).